We begin with the raw amino-acid sequence, 468 residues long: MAKTLYEKVFDAHVVYEGKNELPILYIDRHLIHEVTSPQAFSGLKMAKRRMARADLTLATIDHDVSTKSVDLNACSDMAKEQITTLMQNTKEFGVRLLGLGDKNQGIVHIVSPELGFTLPGVTLVCGDSHTATHGAFGALAFGIGTSEVEHVMATQTLKQAKLKTMKIECKGQFQKGVYAKDLILYLIAQYGTAKGTGYAIEFCGELIRNLSMEARMTLCNMAIEFGAKVGMIAPDEITFEYIKGKEFAPKGEEFQKYCEYWKSLRSDEGAKYDESITLDVSKIKPQISYGTNPSQVIGIDEKIPKISDFKNQSEQKSLLDALSYVNLEQDQVIEGVKIDIVFIGSCTNGRLEDLKIAADILKGRKIHKNVKALIVPGSMQVRKEAENLGLDKIFIEAGCEWRYAGCSMCLGMNDDKANSGQRVASTSNRNFVGRQGKGSITHLMSPASAAACAIEGVICDNRKYLGV.

The [4Fe-4S] cluster site is built by Cys347, Cys407, and Cys410.

The protein belongs to the aconitase/IPM isomerase family. LeuC type 1 subfamily. Heterodimer of LeuC and LeuD. It depends on [4Fe-4S] cluster as a cofactor.

It catalyses the reaction (2R,3S)-3-isopropylmalate = (2S)-2-isopropylmalate. It participates in amino-acid biosynthesis; L-leucine biosynthesis; L-leucine from 3-methyl-2-oxobutanoate: step 2/4. Catalyzes the isomerization between 2-isopropylmalate and 3-isopropylmalate, via the formation of 2-isopropylmaleate. In Campylobacter jejuni subsp. jejuni serotype O:23/36 (strain 81-176), this protein is 3-isopropylmalate dehydratase large subunit.